The following is a 684-amino-acid chain: PAN2-PAN3 deadenylation complex subunit PAN3 (684 aa).

3 disordered regions span residues 1 to 38, 68 to 97, and 112 to 146; these read MLPP…RETA, DPST…PARE, and VPKG…STGL. Residues 21–38 show a composition bias toward basic and acidic residues; that stretch reads EKAKEKEKKHSPEKRETA. The C3H1-type zinc finger occupies 36–65; sequence ETAQRICRNVMIYGYCKYQDQGCIYYHPPA. Positions 127–139 are enriched in pro residues; that stretch reads VPTPSAPTPPVWP. The tract at residues 263 to 544 is pseudokinase domain; it reads GANGASAPGL…SIDEVVKMMG (282 aa). ATP-binding positions include arginine 326 and 375–382; that span reads DYHPLSTT. Residues 387 to 412 are disordered; that stretch reads YLSPNPPEPSPASALANQPPKRRSSP. ATP is bound at residue 444 to 445; it reads SK. A coiled-coil region spans residues 545-583; sequence PRILNELDAVQSYADVLENELGAEVENGRIVRLLTKLGF. Positions 584 to 684 are knob domain; that stretch reads INERAEFELD…NAGNNHRVHR (101 aa).

This sequence belongs to the protein kinase superfamily. PAN3 family. In terms of assembly, homodimer. Forms a heterotrimer with a catalytic subunit PAN2 to form the poly(A)-nuclease (PAN) deadenylation complex. Interacts (via PAM-2 motif) with poly(A)-binding protein PAB1 (via PABC domain), conferring substrate specificity of the enzyme complex.

It localises to the cytoplasm. Its function is as follows. Regulatory subunit of the poly(A)-nuclease (PAN) deadenylation complex, one of two cytoplasmic mRNA deadenylases involved in mRNA turnover. PAN specifically shortens poly(A) tails of RNA and the activity is stimulated by poly(A)-binding protein PAB1. PAN deadenylation is followed by rapid degradation of the shortened mRNA tails by the CCR4-NOT complex. Deadenylated mRNAs are then degraded by two alternative mechanisms, namely exosome-mediated 3'-5' exonucleolytic degradation, or deadenylation-dependent mRNA decaping and subsequent 5'-3' exonucleolytic degradation by XRN1. May also be involved in post-transcriptional maturation of mRNA poly(A) tails. PAN3 acts as a positive regulator for PAN activity, recruiting the catalytic subunit PAN2 to mRNA via its interaction with RNA and with PAB1. The sequence is that of PAN2-PAN3 deadenylation complex subunit PAN3 from Cryptococcus neoformans var. neoformans serotype D (strain B-3501A) (Filobasidiella neoformans).